A 400-amino-acid chain; its full sequence is Enoyl-[acyl-carrier-protein] reductase [NADH] (400 aa).

Residues 74–75 (FE), 111–112 (DA), and 139–140 (VA) each bind NAD(+). Residue Y225 participates in substrate binding. The active-site Proton donor is the Y235. NAD(+)-binding positions include K244 and 273–275 (VVT).

Belongs to the TER reductase family. Monomer.

It catalyses the reaction a 2,3-saturated acyl-[ACP] + NAD(+) = a (2E)-enoyl-[ACP] + NADH + H(+). Its pathway is lipid metabolism; fatty acid biosynthesis. Involved in the final reduction of the elongation cycle of fatty acid synthesis (FAS II). Catalyzes the reduction of a carbon-carbon double bond in an enoyl moiety that is covalently linked to an acyl carrier protein (ACP). The chain is Enoyl-[acyl-carrier-protein] reductase [NADH] from Psychromonas ingrahamii (strain DSM 17664 / CCUG 51855 / 37).